A 398-amino-acid chain; its full sequence is Keratinocyte differentiation factor 1 (398 aa).

Disordered regions lie at residues 1–60 (MPRP…SITF) and 123–156 (AEAN…STMG). Basic and acidic residues predominate over residues 44–55 (RPDPKDPGHHGP). Ser218 carries the post-translational modification Phosphoserine. Disordered stretches follow at residues 307–340 (RKSR…TMVG) and 369–392 (GAPG…SGAP). The segment covering 377 to 389 (HDSSFQGTDTDSS) has biased composition (polar residues).

Its subcellular location is the cytoplasm. It is found in the cell junction. Plays a role in the regulation of the epidermis formation during early development. Required both as an inhibitor of basal cell proliferation and a promoter of differentiation of basal progenitor cell progeny. This is Keratinocyte differentiation factor 1 (KDF1) from Homo sapiens (Human).